Consider the following 266-residue polypeptide: Ribosomal RNA small subunit methyltransferase A (266 aa).

S-adenosyl-L-methionine-binding residues include Asn12, Leu14, Gly39, Glu61, Asp87, and Asn107.

Belongs to the class I-like SAM-binding methyltransferase superfamily. rRNA adenine N(6)-methyltransferase family. RsmA subfamily.

It localises to the cytoplasm. It catalyses the reaction adenosine(1518)/adenosine(1519) in 16S rRNA + 4 S-adenosyl-L-methionine = N(6)-dimethyladenosine(1518)/N(6)-dimethyladenosine(1519) in 16S rRNA + 4 S-adenosyl-L-homocysteine + 4 H(+). Specifically dimethylates two adjacent adenosines (A1518 and A1519) in the loop of a conserved hairpin near the 3'-end of 16S rRNA in the 30S particle. May play a critical role in biogenesis of 30S subunits. This Nitratidesulfovibrio vulgaris (strain DP4) (Desulfovibrio vulgaris) protein is Ribosomal RNA small subunit methyltransferase A.